A 715-amino-acid chain; its full sequence is Polyribonucleotide nucleotidyltransferase (715 aa).

Mg(2+) contacts are provided by Asp490 and Asp496. The KH domain maps to 557-616; the sequence is PRIETMTIPTDKIREVIGSGGKVIREIVETSGAKVDISDDGTIKIASANADSIKKAYDMI. Positions 626 to 694 constitute an S1 motif domain; that stretch reads GKIYVGKVVK…DRGKVRLGMK (69 aa).

It belongs to the polyribonucleotide nucleotidyltransferase family. The cofactor is Mg(2+).

It is found in the cytoplasm. The enzyme catalyses RNA(n+1) + phosphate = RNA(n) + a ribonucleoside 5'-diphosphate. Its function is as follows. Involved in mRNA degradation. Catalyzes the phosphorolysis of single-stranded polyribonucleotides processively in the 3'- to 5'-direction. The polypeptide is Polyribonucleotide nucleotidyltransferase (Paracoccus denitrificans (strain Pd 1222)).